The chain runs to 360 residues: Pyrimidine monooxygenase RutA (360 aa).

FMN-binding positions include 49–50 (IK), Asn115, Glu124, 140–141 (RY), and Ser190.

The protein belongs to the NtaA/SnaA/DszA monooxygenase family. RutA subfamily.

It carries out the reaction uracil + FMNH2 + NADH + O2 = (Z)-3-ureidoacrylate + FMN + NAD(+) + H2O + H(+). It catalyses the reaction thymine + FMNH2 + NADH + O2 = (Z)-2-methylureidoacrylate + FMN + NAD(+) + H2O + H(+). Its function is as follows. Catalyzes the pyrimidine ring opening between N-3 and C-4 by an unusual flavin hydroperoxide-catalyzed mechanism, adding oxygen atoms in the process to yield ureidoacrylate peracid, that immediately reacts with FMN forming ureidoacrylate and FMN-N(5)-oxide. The FMN-N(5)-oxide reacts spontaneously with NADH to produce FMN. Requires the flavin reductase RutF to regenerate FMN in vivo. The protein is Pyrimidine monooxygenase RutA of Stutzerimonas stutzeri (strain A1501) (Pseudomonas stutzeri).